Here is a 355-residue protein sequence, read N- to C-terminus: Zinc finger protein CONSTANS-LIKE 5 (355 aa).

Residues C22, C25, C45, H50, C61, C64, C84, and H89 each contribute to the Zn(2+) site. Residues 22–60 form a B box-type 1; atypical zinc finger; it reads CDACKSVTAAVFCRVDSAFLCIACDTRIHSFTRHERVWV. The B box-type 2; atypical zinc finger occupies 61-103; sequence CEVCEQAPAAVTCKADAAALCVSCDADIHSANPLASRHERVPV. In terms of domain architecture, CCT spans 285–327; it reads REARVLRYREKRKNRKFEKTIRYASRKAYAESRPRIKGRFAKR.

This sequence belongs to the CONSTANS family.

It localises to the nucleus. The chain is Zinc finger protein CONSTANS-LIKE 5 (COL5) from Arabidopsis thaliana (Mouse-ear cress).